Here is a 329-residue protein sequence, read N- to C-terminus: Two pore potassium channel protein sup-9 (329 aa).

Over 1-8 (MKRQNIRT) the chain is Cytoplasmic. The helical transmembrane segment at 9-29 (LSLIVCTLTYLLVGAAVFDAL) threads the bilayer. Asn53 carries N-linked (GlcNAc...) asparagine glycosylation. Residues 80–100 (FSGAFYFATTVITTIGYGHST) constitute an intramembrane region (pore-forming). Residues 93–98 (TIGYGH) carry the Selectivity filter motif. A helical transmembrane segment spans residues 108–128 (VFCMLYALAGIPLGLIMFQSI). The Cytoplasmic portion of the chain corresponds to 129-157 (GERMNTFAAKLLRFIRRAAGKQPIVTSSD). A helical membrane pass occupies residues 158 to 178 (LIIFCTGWGGLLIFGGAFMFS). Asn182 is a glycosylation site (N-linked (GlcNAc...) asparagine). Residues 186-206 (FDAVYYCFVTLTTIGFGDYVA) constitute an intramembrane region (pore-forming). The short motif at 198-203 (TIGFGD) is the Selectivity filter element. A helical membrane pass occupies residues 220-240 (VFFSLVFILFGLTVISAAMNL). Residues 241–329 (LVLRFLTMNT…FSGMTTRPKY (89 aa)) lie on the Cytoplasmic side of the membrane. The segment at 289–296 (SLASCSCY) is may be important for regulation by and/or interaction with sup-10. Residues 307 to 329 (HRKHTEPHGGPPTFSGMTTRPKY) are disordered.

It belongs to the two pore domain potassium channel (TC 1.A.1.8) family. May form a complex with the regulatory subunits unc-93 and sup-10. In terms of tissue distribution, low levels along surface of body-wall muscle cells, in vulval and intestinal muscles and, more weakly, in anal depressor and sphincter muscles. Also expressed in a subset of head neurons.

The protein localises to the membrane. Its function is as follows. Potassium channel involved in coordination of muscle contraction. Activity is regulated by sup-18. The polypeptide is Two pore potassium channel protein sup-9 (Caenorhabditis elegans).